Consider the following 408-residue polypeptide: Bifunctional enzyme IspD/IspF (408 aa).

The 2-C-methyl-D-erythritol 4-phosphate cytidylyltransferase stretch occupies residues 1-247; the sequence is MNAPFEKDRR…GPAMTELPDI (247 aa). Residues 248 to 408 are 2-C-methyl-D-erythritol 2,4-cyclodiphosphate synthase; that stretch reads RVGNGYDVHG…TVAYPGSLGN (161 aa). A divalent metal cation-binding residues include Asp254 and His256. 4-CDP-2-C-methyl-D-erythritol 2-phosphate contacts are provided by residues 254–256 and 280–281; these read DVH and HS. Residue His288 coordinates a divalent metal cation. 4-CDP-2-C-methyl-D-erythritol 2-phosphate-binding positions include 302 to 304, 378 to 381, Phe385, and Arg388; these read DIG and TTNE.

The protein in the N-terminal section; belongs to the IspD/TarI cytidylyltransferase family. IspD subfamily. In the C-terminal section; belongs to the IspF family. The cofactor is a divalent metal cation.

The catalysed reaction is 2-C-methyl-D-erythritol 4-phosphate + CTP + H(+) = 4-CDP-2-C-methyl-D-erythritol + diphosphate. It carries out the reaction 4-CDP-2-C-methyl-D-erythritol 2-phosphate = 2-C-methyl-D-erythritol 2,4-cyclic diphosphate + CMP. It functions in the pathway isoprenoid biosynthesis; isopentenyl diphosphate biosynthesis via DXP pathway; isopentenyl diphosphate from 1-deoxy-D-xylulose 5-phosphate: step 2/6. Its pathway is isoprenoid biosynthesis; isopentenyl diphosphate biosynthesis via DXP pathway; isopentenyl diphosphate from 1-deoxy-D-xylulose 5-phosphate: step 4/6. Its function is as follows. Bifunctional enzyme that catalyzes the formation of 4-diphosphocytidyl-2-C-methyl-D-erythritol from CTP and 2-C-methyl-D-erythritol 4-phosphate (MEP) (IspD), and catalyzes the conversion of 4-diphosphocytidyl-2-C-methyl-D-erythritol 2-phosphate (CDP-ME2P) to 2-C-methyl-D-erythritol 2,4-cyclodiphosphate (ME-CPP) with a corresponding release of cytidine 5-monophosphate (CMP) (IspF). The chain is Bifunctional enzyme IspD/IspF from Chelativorans sp. (strain BNC1).